A 78-amino-acid polypeptide reads, in one-letter code: Small ribosomal subunit protein bS18 (78 aa).

This sequence belongs to the bacterial ribosomal protein bS18 family. As to quaternary structure, part of the 30S ribosomal subunit. Forms a tight heterodimer with protein bS6.

In terms of biological role, binds as a heterodimer with protein bS6 to the central domain of the 16S rRNA, where it helps stabilize the platform of the 30S subunit. This is Small ribosomal subunit protein bS18 from Clostridium novyi (strain NT).